The primary structure comprises 513 residues: Sterol 14-alpha demethylase (513 aa).

Residues 8–28 traverse the membrane as a helical segment; that stretch reads AYALLAFVAIMALNVTYQFLF. Asn32 and Asn332 each carry an N-linked (GlcNAc...) asparagine glycan. Cys453 provides a ligand contact to heme.

It belongs to the cytochrome P450 family. Requires heme as cofactor.

It localises to the endoplasmic reticulum membrane. It catalyses the reaction a 14alpha-methyl steroid + 3 reduced [NADPH--hemoprotein reductase] + 3 O2 = a Delta(14) steroid + formate + 3 oxidized [NADPH--hemoprotein reductase] + 4 H2O + 4 H(+). It carries out the reaction a 14alpha-methyl steroid + reduced [NADPH--hemoprotein reductase] + O2 = a 14alpha-hydroxymethyl steroid + oxidized [NADPH--hemoprotein reductase] + H2O + H(+). The catalysed reaction is a 14alpha-hydroxymethyl steroid + reduced [NADPH--hemoprotein reductase] + O2 = a 14alpha-formyl steroid + oxidized [NADPH--hemoprotein reductase] + 2 H2O + H(+). The enzyme catalyses a 14alpha-formyl steroid + reduced [NADPH--hemoprotein reductase] + O2 = a Delta(14) steroid + formate + oxidized [NADPH--hemoprotein reductase] + H2O + 2 H(+). It catalyses the reaction lanosterol + 3 reduced [NADPH--hemoprotein reductase] + 3 O2 = 4,4-dimethyl-5alpha-cholesta-8,14,24-trien-3beta-ol + formate + 3 oxidized [NADPH--hemoprotein reductase] + 4 H2O + 4 H(+). It carries out the reaction lanosterol + reduced [NADPH--hemoprotein reductase] + O2 = 32-hydroxylanosterol + oxidized [NADPH--hemoprotein reductase] + H2O + H(+). The catalysed reaction is 32-hydroxylanosterol + reduced [NADPH--hemoprotein reductase] + O2 = 32-oxolanosterol + oxidized [NADPH--hemoprotein reductase] + 2 H2O + H(+). The enzyme catalyses 32-oxolanosterol + reduced [NADPH--hemoprotein reductase] + O2 = 4,4-dimethyl-5alpha-cholesta-8,14,24-trien-3beta-ol + formate + oxidized [NADPH--hemoprotein reductase] + H2O + 2 H(+). It catalyses the reaction eburicol + 3 reduced [NADPH--hemoprotein reductase] + 3 O2 = 14-demethyleburicol + formate + 3 oxidized [NADPH--hemoprotein reductase] + 4 H2O + 4 H(+). It carries out the reaction eburicol + reduced [NADPH--hemoprotein reductase] + O2 = 32-hydroxyeburicol + oxidized [NADPH--hemoprotein reductase] + H2O + H(+). The catalysed reaction is 32-hydroxyeburicol + reduced [NADPH--hemoprotein reductase] + O2 = 32-oxoeburicol + oxidized [NADPH--hemoprotein reductase] + 2 H2O + H(+). The enzyme catalyses 32-oxoeburicol + reduced [NADPH--hemoprotein reductase] + O2 = 14-demethyleburicol + formate + oxidized [NADPH--hemoprotein reductase] + H2O + 2 H(+). It functions in the pathway steroid biosynthesis; sterol biosynthesis. Sterol 14alpha-demethylase, encoded by cyp51A, cyp51B and cyp51C, that plays a critical role in the third module of ergosterol biosynthesis pathway, being ergosterol the major sterol component in fungal membranes that participates in a variety of functions. The third module or late pathway involves the ergosterol synthesis itself through consecutive reactions that mainly occur in the endoplasmic reticulum (ER) membrane. In filamentous fungi, during the initial step of this module, lanosterol (lanosta-8,24-dien-3beta-ol) can be metabolized to eburicol. Sterol 14alpha-demethylase catalyzes the three-step oxidative removal of the 14alpha-methyl group (C-32) of both these sterols in the form of formate, and converts eburicol and lanosterol to 14-demethyleburicol (4,4,24-trimethylergosta-8,14,24(28)-trienol) and 4,4-dimethyl-5alpha-cholesta-8,14,24-trien-3beta-ol, respectively, which are further metabolized by other enzymes in the pathway to ergosterol. Can also use substrates not intrinsic to fungi, such as 24,25-dihydrolanosterol (DHL), producing 4,4'-dimethyl-8,14-cholestadien-3-beta-ol, but at lower rates than the endogenous substrates. Functionally, as a target of azole drugs, plays a crucial role in azole drug susceptibility. The sequence is that of Sterol 14-alpha demethylase from Aspergillus flavus (strain ATCC 200026 / FGSC A1120 / IAM 13836 / NRRL 3357 / JCM 12722 / SRRC 167).